The chain runs to 490 residues: Pentatricopeptide repeat-containing protein At2g20710, mitochondrial (490 aa).

A mitochondrion-targeting transit peptide spans 1–86 (MKHLLLLRLV…IKMLRKFSRF (86 aa)). PPR repeat units follow at residues 138–172 (NYHLYGALLNCYASKKVLHKAEQVFQEMKELGFLK), 173–207 (GCLPYNVMLNLYVRTGKYTMVEKLLREMEDETVKP), 208–243 (DIFTVNTRLHAYSVVSDVEGMEKFLMRCEADQGLHL), 244–274 (DWRTYADTANGYIKAGLTEKALEMLRKSEQM), 280–310 (RKHAYEVLMSFYGAAGKKEEVYRLWSLYKEL), 314–344 (YNTGYISVISALLKMDDIEEVEKIMEEWEAG), 349–379 (DIRIPHLLITGYCKKGMMEKAEEVVNILVQK), and 384–421 (DTSTWERLALGYKMAGKMEKAVEKWKRAIEVSKPGWRP).

The protein belongs to the PPR family. P subfamily.

It is found in the mitochondrion. The protein is Pentatricopeptide repeat-containing protein At2g20710, mitochondrial of Arabidopsis thaliana (Mouse-ear cress).